Here is a 430-residue protein sequence, read N- to C-terminus: Tryptophan synthase beta chain (430 aa).

Residue Lys-95 is modified to N6-(pyridoxal phosphate)lysine.

It belongs to the TrpB family. As to quaternary structure, tetramer of two alpha and two beta chains. Requires pyridoxal 5'-phosphate as cofactor.

The enzyme catalyses (1S,2R)-1-C-(indol-3-yl)glycerol 3-phosphate + L-serine = D-glyceraldehyde 3-phosphate + L-tryptophan + H2O. It functions in the pathway amino-acid biosynthesis; L-tryptophan biosynthesis; L-tryptophan from chorismate: step 5/5. Functionally, the beta subunit is responsible for the synthesis of L-tryptophan from indole and L-serine. The protein is Tryptophan synthase beta chain of Halobacterium salinarum (strain ATCC 29341 / DSM 671 / R1).